The sequence spans 133 residues: IgW chain C region, secreted form 2 (133 aa).

One can recognise an Ig-like domain in the interval 1–71; it reads VISGFYPDSV…TGSRFNDRIS (71 aa). 2 N-linked (GlcNAc...) asparagine glycosylation sites follow: asparagine 32 and asparagine 112. The tract at residues 76–133 is secretory tail; sequence KGGTVNLPVPGGNTPCTCPPSSCSGCMPKLVYQTDLNVTLENGGQLQYNCHQQACKIK.

As to expression, expressed mainly in lymphoid tissues including spleen, epigonal organ and circulating lymphocytes.

Its subcellular location is the secreted. In Heterodontus francisci (Horn shark), this protein is IgW chain C region, secreted form 2.